Reading from the N-terminus, the 542-residue chain is CTP synthase (542 aa).

An amidoligase domain region spans residues 1–265 (MTRYIFVTGG…DEIIVERFGL (265 aa)). Ser13 is a CTP binding site. Residue Ser13 coordinates UTP. ATP contacts are provided by residues 14 to 19 (SLGKGI) and Asp71. Mg(2+) is bound by residues Asp71 and Glu139. CTP is bound by residues 146-148 (DIE), 186-191 (KTKPTQ), and Lys222. UTP-binding positions include 186–191 (KTKPTQ) and Lys222. A Glutamine amidotransferase type-1 domain is found at 290-541 (TIAMVGKYME…VRAALENAGG (252 aa)). Gly351 serves as a coordination point for L-glutamine. Cys378 functions as the Nucleophile; for glutamine hydrolysis in the catalytic mechanism. L-glutamine contacts are provided by residues 379-382 (LGLQ), Glu402, and Arg469. Catalysis depends on residues His514 and Glu516.

This sequence belongs to the CTP synthase family. As to quaternary structure, homotetramer.

It catalyses the reaction UTP + L-glutamine + ATP + H2O = CTP + L-glutamate + ADP + phosphate + 2 H(+). It carries out the reaction L-glutamine + H2O = L-glutamate + NH4(+). The catalysed reaction is UTP + NH4(+) + ATP = CTP + ADP + phosphate + 2 H(+). It participates in pyrimidine metabolism; CTP biosynthesis via de novo pathway; CTP from UDP: step 2/2. Allosterically activated by GTP, when glutamine is the substrate; GTP has no effect on the reaction when ammonia is the substrate. The allosteric effector GTP functions by stabilizing the protein conformation that binds the tetrahedral intermediate(s) formed during glutamine hydrolysis. Inhibited by the product CTP, via allosteric rather than competitive inhibition. In terms of biological role, catalyzes the ATP-dependent amination of UTP to CTP with either L-glutamine or ammonia as the source of nitrogen. Regulates intracellular CTP levels through interactions with the four ribonucleotide triphosphates. The sequence is that of CTP synthase from Hahella chejuensis (strain KCTC 2396).